The primary structure comprises 155 residues: Protein SprT-like (155 aa).

Positions 7 to 145 constitute a SprT-like domain; sequence QRHMEEVSLQ…GSCGGKLIQT (139 aa). Residue His-67 coordinates Zn(2+). Glu-68 is a catalytic residue. His-71 contributes to the Zn(2+) binding site.

The protein belongs to the SprT family. Requires Zn(2+) as cofactor.

It localises to the cytoplasm. The sequence is that of Protein SprT-like from Listeria monocytogenes serovar 1/2a (strain ATCC BAA-679 / EGD-e).